The primary structure comprises 184 residues: ATP synthase subunit b, chloroplastic (184 aa).

A helical membrane pass occupies residues 26–48 (ILATNLINLSVVLGVLIFFGKGV).

Belongs to the ATPase B chain family. F-type ATPases have 2 components, F(1) - the catalytic core - and F(0) - the membrane proton channel. F(1) has five subunits: alpha(3), beta(3), gamma(1), delta(1), epsilon(1). F(0) has four main subunits: a(1), b(1), b'(1) and c(10-14). The alpha and beta chains form an alternating ring which encloses part of the gamma chain. F(1) is attached to F(0) by a central stalk formed by the gamma and epsilon chains, while a peripheral stalk is formed by the delta, b and b' chains.

Its subcellular location is the plastid. The protein localises to the chloroplast thylakoid membrane. In terms of biological role, f(1)F(0) ATP synthase produces ATP from ADP in the presence of a proton or sodium gradient. F-type ATPases consist of two structural domains, F(1) containing the extramembraneous catalytic core and F(0) containing the membrane proton channel, linked together by a central stalk and a peripheral stalk. During catalysis, ATP synthesis in the catalytic domain of F(1) is coupled via a rotary mechanism of the central stalk subunits to proton translocation. Component of the F(0) channel, it forms part of the peripheral stalk, linking F(1) to F(0). This chain is ATP synthase subunit b, chloroplastic, found in Acorus calamus (Sweet flag).